The sequence spans 865 residues: Rifampicin phosphotransferase (865 aa).

The interval 2–314 (SGRLVVDLQD…FHIVQSRPIT (313 aa)) is ATP-binding. Positions 23, 117, 132, 136, 183, 297, 309, and 311 each coordinate ATP. A rifampicin-binding region spans residues 327 to 752 (FRVYLSVGHQ…TSEGVALSGA (426 aa)). Residues 403–430 (ENGEFEPTPAETDGGAPPAGDGAEPDEA) are disordered. Over residues 409–424 (PTPAETDGGAPPAGDG) the composition is skewed to low complexity. Positions 765-863 (GLAVSAGTVE…VHGTEGYIEL (99 aa)) are swivel phosphohistidine. Histidine 823 (tele-phosphohistidine intermediate) is an active-site residue.

Belongs to the rifampicin phosphotransferase family.

It catalyses the reaction rifampicin + ATP + H2O = 21-phosphorifampicin + AMP + phosphate + 2 H(+). Catalyzes the phosphorylation of rifampicin, also known as rifampin (RIF), leading to its inactivation. Confers high level resistance to a variety of clinically used rifamycin antibiotics. The protein is Rifampicin phosphotransferase of Streptomyces sp.